Here is a 492-residue protein sequence, read N- to C-terminus: NADH-quinone oxidoreductase subunit N (492 aa).

14 helical membrane-spanning segments follow: residues L16 to F36, L44 to G64, I81 to M101, G111 to S131, L134 to L154, F168 to A188, I210 to V230, N244 to I264, A276 to I296, M306 to T326, V332 to W352, L382 to F402, I423 to F443, and F463 to L483.

The protein belongs to the complex I subunit 2 family. NDH-1 is composed of 14 different subunits. Subunits NuoA, H, J, K, L, M, N constitute the membrane sector of the complex.

The protein localises to the cell inner membrane. The catalysed reaction is a quinone + NADH + 5 H(+)(in) = a quinol + NAD(+) + 4 H(+)(out). Its function is as follows. NDH-1 shuttles electrons from NADH, via FMN and iron-sulfur (Fe-S) centers, to quinones in the respiratory chain. The immediate electron acceptor for the enzyme in this species is believed to be ubiquinone. Couples the redox reaction to proton translocation (for every two electrons transferred, four hydrogen ions are translocated across the cytoplasmic membrane), and thus conserves the redox energy in a proton gradient. In Helicobacter hepaticus (strain ATCC 51449 / 3B1), this protein is NADH-quinone oxidoreductase subunit N.